A 338-amino-acid chain; its full sequence is Putative peptide import ATP-binding protein BOV_A0348 (338 aa).

The region spanning 10–263 is the ABC transporter domain; the sequence is KGLRTVFRTR…PRHPYTMGLL (254 aa). 43-50 is an ATP binding site; that stretch reads GESGSGKS.

Belongs to the ABC transporter superfamily. The complex is composed of two ATP-binding proteins (BOV_A0347 and BOV_A0348), two transmembrane proteins (BOV_A0350 and BOV_A0351) and a solute-binding protein (BOV_A0352).

Its subcellular location is the cell inner membrane. Functionally, probably part of an ABC transporter complex that could be involved in peptide import. Probably responsible for energy coupling to the transport system. The polypeptide is Putative peptide import ATP-binding protein BOV_A0348 (Brucella ovis (strain ATCC 25840 / 63/290 / NCTC 10512)).